Here is a 348-residue protein sequence, read N- to C-terminus: D-alanine--D-alanine ligase (348 aa).

The 203-residue stretch at 132–334 (KRVLESAGIA…YPDLIEKLVA (203 aa)) folds into the ATP-grasp domain. Position 162-217 (162-217 (EEKLSYPVFTKPSNMGSSVGISKSDNQEELRASLDLAFKYDSRVLVEQGVTAREIE)) interacts with ATP. 3 residues coordinate Mg(2+): Asp-288, Glu-301, and Asn-303.

The protein belongs to the D-alanine--D-alanine ligase family. Mg(2+) serves as cofactor. Requires Mn(2+) as cofactor.

It localises to the cytoplasm. It catalyses the reaction 2 D-alanine + ATP = D-alanyl-D-alanine + ADP + phosphate + H(+). The protein operates within cell wall biogenesis; peptidoglycan biosynthesis. Functionally, cell wall formation. The polypeptide is D-alanine--D-alanine ligase (Streptococcus gordonii (strain Challis / ATCC 35105 / BCRC 15272 / CH1 / DL1 / V288)).